An 84-amino-acid polypeptide reads, in one-letter code: MANHKSSLKRIRQEETRRLHNRYYGKTMRNAVRKLRATTDKKEAVAMYPGITKMLDKLAKTNVIHKNKANNLKSKLALYINKLA.

It belongs to the bacterial ribosomal protein bS20 family.

In terms of biological role, binds directly to 16S ribosomal RNA. The protein is Small ribosomal subunit protein bS20 of Bacteroides thetaiotaomicron (strain ATCC 29148 / DSM 2079 / JCM 5827 / CCUG 10774 / NCTC 10582 / VPI-5482 / E50).